We begin with the raw amino-acid sequence, 405 residues long: L-carnitine CoA-transferase (405 aa).

CoA-binding residues include Lys97 and Arg104. Asp169 acts as the Nucleophile in catalysis.

Belongs to the CoA-transferase III family. CaiB subfamily. As to quaternary structure, homodimer.

It localises to the cytoplasm. It carries out the reaction crotonobetainyl-CoA + (R)-carnitine = crotonobetaine + (R)-carnitinyl-CoA. The enzyme catalyses 4-(trimethylamino)butanoyl-CoA + (R)-carnitine = (R)-carnitinyl-CoA + 4-(trimethylamino)butanoate. Its pathway is amine and polyamine metabolism; carnitine metabolism. In terms of biological role, catalyzes the reversible transfer of the CoA moiety from gamma-butyrobetainyl-CoA to L-carnitine to generate L-carnitinyl-CoA and gamma-butyrobetaine. Is also able to catalyze the reversible transfer of the CoA moiety from gamma-butyrobetainyl-CoA or L-carnitinyl-CoA to crotonobetaine to generate crotonobetainyl-CoA. The chain is L-carnitine CoA-transferase from Escherichia fergusonii (strain ATCC 35469 / DSM 13698 / CCUG 18766 / IAM 14443 / JCM 21226 / LMG 7866 / NBRC 102419 / NCTC 12128 / CDC 0568-73).